The sequence spans 236 residues: Peptidase E (236 aa).

Catalysis depends on charge relay system residues Ser122, Asp137, and His159.

It belongs to the peptidase S51 family.

The protein resides in the cytoplasm. The enzyme catalyses Dipeptidase E catalyzes the hydrolysis of dipeptides Asp-|-Xaa. It does not act on peptides with N-terminal Glu, Asn or Gln, nor does it cleave isoaspartyl peptides.. In terms of biological role, hydrolyzes dipeptides containing N-terminal aspartate residues. May play a role in allowing the cell to use peptide aspartate to spare carbon otherwise required for the synthesis of the aspartate family of amino acids. In Shewanella sp. (strain MR-4), this protein is Peptidase E.